The primary structure comprises 551 residues: Dihydroxy-acid dehydratase (551 aa).

Cysteine 52 contacts [2Fe-2S] cluster. Residue aspartate 84 coordinates Mg(2+). Cysteine 125 serves as a coordination point for [2Fe-2S] cluster. The Mg(2+) site is built by aspartate 126 and lysine 127. N6-carboxylysine is present on lysine 127. Cysteine 197 contacts [2Fe-2S] cluster. Glutamate 448 is a binding site for Mg(2+). The active-site Proton acceptor is the serine 474.

It belongs to the IlvD/Edd family. As to quaternary structure, homodimer. It depends on [2Fe-2S] cluster as a cofactor. Requires Mg(2+) as cofactor.

The enzyme catalyses (2R)-2,3-dihydroxy-3-methylbutanoate = 3-methyl-2-oxobutanoate + H2O. It catalyses the reaction (2R,3R)-2,3-dihydroxy-3-methylpentanoate = (S)-3-methyl-2-oxopentanoate + H2O. The protein operates within amino-acid biosynthesis; L-isoleucine biosynthesis; L-isoleucine from 2-oxobutanoate: step 3/4. It functions in the pathway amino-acid biosynthesis; L-valine biosynthesis; L-valine from pyruvate: step 3/4. Functions in the biosynthesis of branched-chain amino acids. Catalyzes the dehydration of (2R,3R)-2,3-dihydroxy-3-methylpentanoate (2,3-dihydroxy-3-methylvalerate) into 2-oxo-3-methylpentanoate (2-oxo-3-methylvalerate) and of (2R)-2,3-dihydroxy-3-methylbutanoate (2,3-dihydroxyisovalerate) into 2-oxo-3-methylbutanoate (2-oxoisovalerate), the penultimate precursor to L-isoleucine and L-valine, respectively. In Francisella tularensis subsp. tularensis (strain FSC 198), this protein is Dihydroxy-acid dehydratase.